A 379-amino-acid polypeptide reads, in one-letter code: Protein PatA (379 aa).

Residues 181–226 (RREASSQEISSSTEHNQIPVNNRRSTKFTSPPHTQPKPEPRLPQIN) are disordered. Positions 186 to 212 (SQEISSSTEHNQIPVNNRRSTKFTSPP) are enriched in polar residues. Positions 262-378 (TIFCIDENPI…DLLKVIFKHI (117 aa)) constitute a Response regulatory domain. Residue Asp313 is modified to 4-aspartylphosphate.

It is found in the cell septum. Controls heterocyst pattern formation. Required for the differentiation of intercalary heterocysts but not for terminal heterocysts. This chain is Protein PatA (patA), found in Nostoc sp. (strain PCC 7120 / SAG 25.82 / UTEX 2576).